A 476-amino-acid chain; its full sequence is Adenylosuccinate synthetase, chloroplastic (476 aa).

Positions 1-20 are enriched in low complexity; that stretch reads AAAAAGRGRSFSPAAPAPSS. The tract at residues 1 to 34 is disordered; that stretch reads AAAAAGRGRSFSPAAPAPSSVRLPGRQAPAPAAA. GTP-binding positions include 63–69 and 91–93; these read GDEGKGK and GHT. Aspartate 64 (proton acceptor) is an active-site residue. Positions 64 and 91 each coordinate Mg(2+). IMP is bound by residues 64 to 67, 89 to 92, threonine 181, arginine 195, glutamine 275, threonine 290, and arginine 354; these read DEGK and NAGH. The active-site Proton donor is histidine 92. Position 350–356 (350–356) interacts with substrate; sequence TTTGRPR. GTP is bound by residues arginine 356, 382–384, and 465–467; these read KLD and GVG.

The protein belongs to the adenylosuccinate synthetase family. Homodimer. Mg(2+) serves as cofactor.

Its subcellular location is the plastid. The protein localises to the chloroplast. The enzyme catalyses IMP + L-aspartate + GTP = N(6)-(1,2-dicarboxyethyl)-AMP + GDP + phosphate + 2 H(+). Its pathway is purine metabolism; AMP biosynthesis via de novo pathway; AMP from IMP: step 1/2. Functionally, plays an important role in the de novo pathway and in the salvage pathway of purine nucleotide biosynthesis. Catalyzes the first committed step in the biosynthesis of AMP from IMP. The polypeptide is Adenylosuccinate synthetase, chloroplastic (Triticum aestivum (Wheat)).